A 1187-amino-acid polypeptide reads, in one-letter code: MATESTTNTTTIIARADQHDIDLHKASDRVNFGSIKEPIDVPYLLGVQTDSFDWLIGNERWKARVEEDEKNGTNTVAHTSGLDEVFNEISPIENFAQTMSLTFSDPYFEEPRHTVQECKEKDYTYSAPLYVNAEFENGDTGEIKSQTVFMGDFPLQTPHGTFIIGGTERVIVSQLVRSPGVYFDRQQDRTSDKEVFGAKIIPSRGAWLEFEIDKKDQPQVRVDRKRKQSAIVFLMAIGMTKSEIAQAFKDYPLVLDALEKETLETQDEALVDLYRKIRPADTPTPEAGKNLLDSFYFNTKRYDLARVGRYKINRKLGVEADFNDRSLHQEDIIATIKYLVALHDGAATFPGKRNGEDVDLRVDVDDIDHFGNRRIRQVGELIQNQLRTGLSRMERVVRERMTTQDAEAITPQSLINIRPVNATIKEFFGTSQLSQFMDQNNPLSGVTNKRRLSALGPGGLSRDRASMEVRDVHPSHFGRMCPIESPEGPNIGLIGSLATFGRVNPFGFIETPYRKVVNGHVTDEVEYMTADRDLDHVIAQANQELDENGNFVQKSALARVGEEEAVDVPVSSVDYMDVSPRQMVSLGASLIPFLEHDEGHRALMGTNMQRQAVPLIESERPLVGTGSEWRAANDSGDVIKSEKDGVVTYVSADLIRVMNDDGTTSSYKLAKFQRSNQTTCYNQRPIVHDGERVEAGSVMADGPAIQNGDLALGKNLLIAFMPWNGYNYEDAVIISQRLVQDDTLSSIHIEEYEIDARETKLGAEEITRDLPNVGEDAVANLDERGIIRIGAEVEAGDILVGKVTPKGETELTPEERLLRAIFGEKSREVRDTSLRVPHGETGTVIGVKEITREDAEEDGDELPNGVNQMIRVYIAQHRKITVGDKLSGRHGNKGCISRILPEEDMPFLADGTPVDIMLNPLGVPSRMNLGQVLELHLGWIAHSGWDISLDPNLEAEWKKLIPSGAEKAEPNTPVATPVFDGVKPEVLKGLLSTTLPNRDGDRLVGPDGKATLFDGRTGEPYTKPISVGYMYMLKLHHLVDDKIHARSTGPYSMITQQPLGGKAQFGGQRFGEMEVWALEAYGAAYTLHEMMTTKSDDVDGRVRVYGAIVKGDNLPPAGIPESFKVLLKEMQSLSLNVEVLNAEGVAIDMKDEDDDPASSADDLGFNIGARPDAAAKEDQKAEEPEYQ.

Residues 1150-1187 form a disordered region; that stretch reads KDEDDDPASSADDLGFNIGARPDAAAKEDQKAEEPEYQ. Residues 1173–1187 are compositionally biased toward basic and acidic residues; the sequence is AAAKEDQKAEEPEYQ.

This sequence belongs to the RNA polymerase beta chain family. In terms of assembly, the RNAP catalytic core consists of 2 alpha, 1 beta, 1 beta' and 1 omega subunit. When a sigma factor is associated with the core the holoenzyme is formed, which can initiate transcription.

The catalysed reaction is RNA(n) + a ribonucleoside 5'-triphosphate = RNA(n+1) + diphosphate. DNA-dependent RNA polymerase catalyzes the transcription of DNA into RNA using the four ribonucleoside triphosphates as substrates. This Bifidobacterium longum (strain NCC 2705) protein is DNA-directed RNA polymerase subunit beta.